Consider the following 175-residue polypeptide: ATP synthase subunit b (175 aa).

The chain crosses the membrane as a helical span at residues 14 to 34 (LNPNPGLIFWTALTFLIVLVI).

The protein belongs to the ATPase B chain family. F-type ATPases have 2 components, F(1) - the catalytic core - and F(0) - the membrane proton channel. F(1) has five subunits: alpha(3), beta(3), gamma(1), delta(1), epsilon(1). F(0) has four main subunits: a(1), b(2) and c(10-14). The alpha and beta chains form an alternating ring which encloses part of the gamma chain. F(1) is attached to F(0) by a central stalk formed by the gamma and epsilon chains, while a peripheral stalk is formed by the delta and b chains.

It is found in the cell inner membrane. In terms of biological role, f(1)F(0) ATP synthase produces ATP from ADP in the presence of a proton or sodium gradient. F-type ATPases consist of two structural domains, F(1) containing the extramembraneous catalytic core and F(0) containing the membrane proton channel, linked together by a central stalk and a peripheral stalk. During catalysis, ATP synthesis in the catalytic domain of F(1) is coupled via a rotary mechanism of the central stalk subunits to proton translocation. Functionally, component of the F(0) channel, it forms part of the peripheral stalk, linking F(1) to F(0). The polypeptide is ATP synthase subunit b (Chlorobaculum tepidum (strain ATCC 49652 / DSM 12025 / NBRC 103806 / TLS) (Chlorobium tepidum)).